A 164-amino-acid chain; its full sequence is UPF0304 protein MS2240 (164 aa).

Belongs to the UPF0304 family.

This is UPF0304 protein MS2240 from Mannheimia succiniciproducens (strain KCTC 0769BP / MBEL55E).